The following is a 551-amino-acid chain: Nose resistant to fluoxetine protein 5 (551 aa).

A signal peptide spans M1–S20. C151 and C232 are oxidised to a cystine. The tract at residues E241–L265 is disordered.

This sequence belongs to the BPI/LBP/Plunc superfamily. BPI/LBP family. Interacts with ttr-52. As to expression, expressed in the body wall muscle cells and detected at the basal surface of pharyngeal cells and basal-lateral membranes of the intestine.

It localises to the secreted. Functionally, plays a role in the uptake of a range of molecules including phosphatidylserine, lipids and xenobiotic compounds from the intestine to surrounding tissues. Possesses lipid transfer activity. Mediates transport of lipids from intestine to reproductive tract. Binds phosphatidylserine. Plays a role in efficient clearance of cell corpses by mediating phosphatidylserine appearance on phagocytic cells, thus promoting phagocytic engulfment of apoptotic cells. Vital for embryonic development. This chain is Nose resistant to fluoxetine protein 5, found in Caenorhabditis elegans.